We begin with the raw amino-acid sequence, 271 residues long: Phosphate import ATP-binding protein PstB (271 aa).

The 242-residue stretch at 25 to 266 (VDVRQLSLWY…PKHPYTEAYI (242 aa)) folds into the ABC transporter domain. 57 to 64 (GPSGCGKS) lines the ATP pocket.

Belongs to the ABC transporter superfamily. Phosphate importer (TC 3.A.1.7) family. The complex is composed of two ATP-binding proteins (PstB), two transmembrane proteins (PstC and PstA) and a solute-binding protein (PstS).

The protein resides in the cell inner membrane. The catalysed reaction is phosphate(out) + ATP + H2O = ADP + 2 phosphate(in) + H(+). Part of the ABC transporter complex PstSACB involved in phosphate import. Responsible for energy coupling to the transport system. This chain is Phosphate import ATP-binding protein PstB, found in Thermus thermophilus (strain ATCC BAA-163 / DSM 7039 / HB27).